The primary structure comprises 362 residues: 1-aminocyclopropane-1-carboxylate oxidase homolog 10 (362 aa).

Positions 211-310 constitute a Fe2OG dioxygenase domain; it reads KGLFMLCHYY…RISVACFFSS (100 aa). 3 residues coordinate Fe cation: histidine 235, aspartate 237, and histidine 291. Arginine 301 contributes to the 2-oxoglutarate binding site.

This sequence belongs to the iron/ascorbate-dependent oxidoreductase family. Requires Fe(2+) as cofactor.

The protein is 1-aminocyclopropane-1-carboxylate oxidase homolog 10 of Arabidopsis thaliana (Mouse-ear cress).